The chain runs to 137 residues: ATP synthase epsilon chain, chloroplastic (137 aa).

Belongs to the ATPase epsilon chain family. F-type ATPases have 2 components, CF(1) - the catalytic core - and CF(0) - the membrane proton channel. CF(1) has five subunits: alpha(3), beta(3), gamma(1), delta(1), epsilon(1). CF(0) has three main subunits: a, b and c.

It is found in the plastid. Its subcellular location is the chloroplast thylakoid membrane. Produces ATP from ADP in the presence of a proton gradient across the membrane. This is ATP synthase epsilon chain, chloroplastic from Pinus koraiensis (Korean pine).